The chain runs to 47 residues: Lysis protein for colicin E5 (47 aa).

The N-terminal stretch at 1–19 is a signal peptide; the sequence is MKKITWIILLLLAAIILAA. Cys20 is lipidated: N-palmitoyl cysteine. Cys20 carries S-diacylglycerol cysteine lipidation.

The protein localises to the cell outer membrane. Functionally, lysis proteins are required for both colicin release and partial cell lysis. The sequence is that of Lysis protein for colicin E5 (lys) from Escherichia coli.